Here is a 91-residue protein sequence, read N- to C-terminus: Defensin-like protein 82 (91 aa).

A signal peptide spans 1 to 27; it reads MAIKKFSSLLLPLLMVLALVVLPIISG. 4 cysteine pairs are disulfide-bonded: Cys34-Cys72, Cys41-Cys62, Cys47-Cys70, and Cys51-Cys71.

This sequence belongs to the DEFL family.

It is found in the secreted. The sequence is that of Defensin-like protein 82 from Arabidopsis thaliana (Mouse-ear cress).